A 510-amino-acid chain; its full sequence is D-alanine--D-alanyl carrier protein ligase (510 aa).

157–158 (TS) contacts ATP. Residue Asp202 participates in D-alanine binding. 297-302 (NTYGPT) serves as a coordination point for ATP. A D-alanine-binding site is contributed by Val306. 2 residues coordinate ATP: Asp389 and Lys498. Lys498 contacts D-alanine.

This sequence belongs to the ATP-dependent AMP-binding enzyme family. DltA subfamily.

Its subcellular location is the cytoplasm. It catalyses the reaction holo-[D-alanyl-carrier protein] + D-alanine + ATP = D-alanyl-[D-alanyl-carrier protein] + AMP + diphosphate. It functions in the pathway cell wall biogenesis; lipoteichoic acid biosynthesis. In terms of biological role, catalyzes the first step in the D-alanylation of lipoteichoic acid (LTA), the activation of D-alanine and its transfer onto the D-alanyl carrier protein (Dcp) DltC. In an ATP-dependent two-step reaction, forms a high energy D-alanyl-AMP intermediate, followed by transfer of the D-alanyl residue as a thiol ester to the phosphopantheinyl prosthetic group of the Dcp. D-alanylation of LTA plays an important role in modulating the properties of the cell wall in Gram-positive bacteria, influencing the net charge of the cell wall. The polypeptide is D-alanine--D-alanyl carrier protein ligase (Listeria monocytogenes serotype 4b (strain F2365)).